Consider the following 337-residue polypeptide: Glyceraldehyde-3-phosphate dehydrogenase 1 (337 aa).

NAD(+) contacts are provided by residues 12–13 (RI), aspartate 34, and arginine 79. Residues 150 to 152 (SCT), threonine 181, 210 to 211 (TG), and arginine 233 contribute to the D-glyceraldehyde 3-phosphate site. Catalysis depends on cysteine 151, which acts as the Nucleophile. Asparagine 315 is a binding site for NAD(+).

It belongs to the glyceraldehyde-3-phosphate dehydrogenase family. As to quaternary structure, homotetramer.

It localises to the cytoplasm. The enzyme catalyses D-glyceraldehyde 3-phosphate + phosphate + NAD(+) = (2R)-3-phospho-glyceroyl phosphate + NADH + H(+). The protein operates within carbohydrate degradation; glycolysis; pyruvate from D-glyceraldehyde 3-phosphate: step 1/5. This Mucor circinelloides f. lusitanicus (Mucor racemosus var. lusitanicus) protein is Glyceraldehyde-3-phosphate dehydrogenase 1 (GPD1).